A 399-amino-acid chain; its full sequence is Inositol polyphosphate 1-phosphatase (399 aa).

D54 lines the Li(+) pocket. E79 contributes to the Mg(2+) binding site. E80 lines the Li(+) pocket. Mg(2+) contacts are provided by D153 and I155. Residues D156, S157, T158, S267, K269, G289, A290, K293, and T311 each coordinate 1D-myo-inositol 1,4-bisphosphate. D316 contacts Mg(2+). A Phosphoserine modification is found at S317.

It belongs to the inositol monophosphatase superfamily. In terms of assembly, monomer. Mg(2+) is required as a cofactor. In terms of tissue distribution, ubiquitously expressed, with highest levels in pancreas and kidney.

It catalyses the reaction 1D-myo-inositol 1,4-bisphosphate + H2O = 1D-myo-inositol 4-phosphate + phosphate. It carries out the reaction 1D-myo-inositol 1,3,4-trisphosphate + H2O = 1D-myo-inositol 3,4-bisphosphate + phosphate. It functions in the pathway signal transduction; phosphatidylinositol signaling pathway. Inhibited by Li(+). Its function is as follows. Mg(2+)-dependent phosphatase that catalyzes the hydrolysis of the 1-position phosphate from inositol 1,4-bisphosphate and inositol 1,3,4-trisphosphate and participates in inositol phosphate metabolism. This Homo sapiens (Human) protein is Inositol polyphosphate 1-phosphatase.